A 105-amino-acid polypeptide reads, in one-letter code: UPF0145 protein lpl0253 (105 aa).

The protein belongs to the UPF0145 family.

The protein is UPF0145 protein lpl0253 of Legionella pneumophila (strain Lens).